The primary structure comprises 745 residues: Immunoglobulin superfamily containing leucine-rich repeat protein 2 (745 aa).

The first 19 residues, 1 to 19, serve as a signal peptide directing secretion; the sequence is MGPFGALCLAWALLGVVRA. In terms of domain architecture, LRRNT spans 20–51; that stretch reads CPEPCACVDKYAHQFADCAYKELREVPEGLPA. Residues 20–589 are Extracellular-facing; the sequence is CPEPCACVDK…VFSTKKELPS (570 aa). 2 N-linked (GlcNAc...) asparagine glycosylation sites follow: Asn52 and Asn73. LRR repeat units lie at residues 52–73, 76–97, 100–123, 124–145, and 148–169; these read NVTTLSLSANKITVLRRGAFVN, QVTSLWLAHSEVRTVESGALAV, QLKNLDLSHNLISNFPWSDLRNLS, ALQLLKMNHNRLGSLPRDALGA, and DLRSLRINNNRLRTLEPGTFDA. Asn121 carries an N-linked (GlcNAc...) asparagine glycan. An LRRCT domain is found at 181 to 232; the sequence is NPFHCSCGLVWLQAWAASTRVSLPEPDSIACASPPELQGVPVHRLPALPCAP. The Ig-like domain occupies 233–372; the sequence is PSVRLSAEPP…GTNSTSLRVT (140 aa). An intrachain disulfide couples Cys260 to Cys356. Positions 290-300 are enriched in basic and acidic residues; the sequence is KEEDGGDKVED. The tract at residues 290–328 is disordered; sequence KEEDGGDKVEDGEGDGDEDLPTQTEAPTPTPAPAWPAPP. Over residues 317 to 328 the composition is skewed to pro residues; the sequence is TPTPAPAWPAPP. Residues Asn338 and Asn365 are each glycosylated (N-linked (GlcNAc...) asparagine). The disordered stretch occupies residues 376–423; sequence AGPPKHAPGTGEEPDAQVPTSERKATTKGRSNSVLPFKPEGKTKGQGL. 2 N-linked (GlcNAc...) asparagine glycosylation sites follow: Asn474 and Asn563. The helical transmembrane segment at 590–610 threads the bilayer; the sequence is LLVIVTVSVFLLVLATVPLLG. At 611–745 the chain is on the cytoplasmic side; it reads AACCHLLAKH…INGNYRQTAG (135 aa). The interval 654-697 is disordered; the sequence is SEKSYPARGEAGGEEPEEVPEEGLDEDVEQGDPSGDLQREESLA. Acidic residues predominate over residues 665–683; that stretch reads GGEEPEEVPEEGLDEDVEQ. Residue Tyr719 is modified to Phosphotyrosine. At Ser720 the chain carries Phosphoserine.

Homomultimer. Interacts with NTRK1/TrkA. At 11.5 dpc, expressed in spinal nerves, their roots and the ventral spinal cord. At 12.5 dpc, detected in the ventral spinal cord, dorsal root ganglia (DRG), dorsal and ventral roots and sympathetic chain ganglia. At 12.5 dpc, expressed in almost all motor neurons which also express RET and in almost all DRG sensory neurons which also express NTRK1. At 18.5 dpc, expressed only in a subset of NTRK1-expressing neurons but still expressed in nearly all RET-expressing neurons.

It is found in the cell membrane. In terms of biological role, required for axon extension during neural development. The polypeptide is Immunoglobulin superfamily containing leucine-rich repeat protein 2 (Islr2) (Mus musculus (Mouse)).